A 306-amino-acid chain; its full sequence is Homoserine kinase (306 aa).

Position 88–98 (88–98) interacts with ATP; sequence PLARGLGSSAT.

The protein belongs to the GHMP kinase family. Homoserine kinase subfamily.

The protein resides in the cytoplasm. The enzyme catalyses L-homoserine + ATP = O-phospho-L-homoserine + ADP + H(+). The protein operates within amino-acid biosynthesis; L-threonine biosynthesis; L-threonine from L-aspartate: step 4/5. Its function is as follows. Catalyzes the ATP-dependent phosphorylation of L-homoserine to L-homoserine phosphate. In Synechococcus sp. (strain ATCC 27144 / PCC 6301 / SAUG 1402/1) (Anacystis nidulans), this protein is Homoserine kinase.